The primary structure comprises 712 residues: Osmolarity two-component system protein SSK1 (712 aa).

The segment at 73-114 (ADNTSSNNTNDNSCRSKSNGAGSGANLSVNSNTKSSVSPTAG) is disordered. The span at 74 to 85 (DNTSSNNTNDNS) shows a compositional bias: low complexity. Over residues 87–113 (RSKSNGAGSGANLSVNSNTKSSVSPTA) the composition is skewed to polar residues. Residues serine 110, serine 195, serine 327, serine 351, serine 368, and serine 380 each carry the phosphoserine modification. The tract at residues 340–362 (KADLKGKDGNSSPQEFKLITDEE) is disordered. Residues 448–468 (EVQRRKEDVTPASPILTSSQT) form a disordered region. Residues 505–647 (NVLIVEDNVI…WLSKKITEWG (143 aa)) form the Response regulatory domain. The residue at position 554 (aspartate 554) is a 4-aspartylphosphate. Residues 672–712 (KSPQKPIAPSNPHSFKQATSMTPTHSPVRKNSNLSPTQIEL) are disordered. Serine 673 is subject to Phosphoserine. Over residues 682 to 712 (NPHSFKQATSMTPTHSPVRKNSNLSPTQIEL) the composition is skewed to polar residues. Threonine 693 bears the Phosphothreonine mark. Serine 703 and serine 706 each carry phosphoserine.

The protein belongs to the SSK1 family. Interacts with SSK2, SSK22 and YPD1. Post-translationally, the phosphorelay mechanism involves the sequential transfer of a phosphate group from 'His-576' (H1) to 'Asp-1144' (D1) of SLN1, then to 'His-64' (H2) of YPD1 and finally to Asp-554 (D2) of SSK1.

The protein resides in the cytoplasm. In terms of biological role, final receptor of the SLN1-YPD1-SSK1 two-component regulatory system, which controls activity of the HOG1 pathway in response to changes in the osmolarity of the extracellular environment. Under normal osmotic conditions, maintained in a phosphorylated and inactive state by the phosphorelay intermediate protein YPD1. Under conditions of high osmolarity, the histidine kinase SLN1 is no longer active and the unphosphorylated form of SSK1 interacts with and activates SSK2 and SSK22, two MAPKKKs that further stimulate the PBS2-HOG1 MAPKK-MAPK cascade. Unphosphorylated SSK1 is subsequently degraded by the UBC7-dependent ubiquitin-proteasome system to down-regulate the HOG1 pathway after completion of the osmotic adaptation. In Saccharomyces cerevisiae (strain ATCC 204508 / S288c) (Baker's yeast), this protein is Osmolarity two-component system protein SSK1.